The sequence spans 138 residues: Cytosolic calcium-binding protein 2 (138 aa).

Residues 31–41 show a composition bias toward low complexity; the sequence is TEVTQQPEESV. The interval 31–122 is disordered; sequence TEVTQQPEES…KKTEVVEEKQ (92 aa). A run of 6 repeats spans residues 62 to 68, 71 to 75, 92 to 98, 109 to 114, 118 to 122, and 131 to 135. The 6 X 5 AA approximate repeats of V-E-E-K-K stretch occupies residues 62-135; sequence VEEAEKKDEE…AAAEEVAVEK (74 aa). Positions 64–85 are enriched in basic and acidic residues; that stretch reads EAEKKDEETEKKTEEKDEKTEV. The segment covering 110 to 122 has biased composition (basic and acidic residues); sequence EEEKKTEVVEEKQ.

As to expression, predominantly expressed in roots (e.g. in endodermis in the stele) and stems, to a lower extent in shoots, flowers and siliques, and, at low levels, in leaves.

The protein localises to the cytoplasm. It is found in the cytosol. In terms of biological role, binds calcium Ca(2+) and may act as a signal mediator to buffer Ca(2+). In Arabidopsis thaliana (Mouse-ear cress), this protein is Cytosolic calcium-binding protein 2.